The chain runs to 840 residues: Recyclin-1 (840 aa).

The region spanning 1–48 is the F-box domain; the sequence is MDDLLKVPEIVTNIASYLSTVDYLSFQQVNKRVYAIINGKNDSKYWSL. Ser-409 carries the post-translational modification Phosphoserine.

In terms of assembly, interacts with SKP1.

The protein resides in the cytoplasm. Its subcellular location is the bud neck. The protein localises to the cell tip. In terms of biological role, involved in recycling plasma membrane proteins internalized by endocytosis. Required for recycling of the v-SNARE SNC1. The polypeptide is Recyclin-1 (RCY1) (Saccharomyces cerevisiae (strain ATCC 204508 / S288c) (Baker's yeast)).